Consider the following 189-residue polypeptide: GTPase NRas (189 aa).

GTP-binding positions include 10–18 (GAGGVGKSA) and 29–30 (VD). The Effector region signature appears at 32-40 (YDPTIEDSY). Residue T35 is glycosylated ((Microbial infection) O-linked (Glc) threonine; by P.sordellii toxin TcsL). 57–61 (DTAGQ) is a binding site for GTP. S89 is subject to Phosphoserine. 116–119 (NKCD) serves as a coordination point for GTP. The tract at residues 166 to 185 (YRMKKLNSSDDGTQGCMGLP) is hypervariable region. Residue K170 forms a Glycyl lysine isopeptide (Lys-Gly) (interchain with G-Cter in ubiquitin) linkage. C181 carries S-palmitoyl cysteine lipidation. The S-farnesyl cysteine moiety is linked to residue C186. Positions 187–189 (VVM) are cleaved as a propeptide — removed in mature form.

It belongs to the small GTPase superfamily. Ras family. Interacts (active GTP-bound form preferentially) with RGS14. Interacts (active GTP-bound form) with RASSF7. Interacts (active GTP-bound form) with both SHOC2 and PP1c (all isoforms) to form a tertiary complex; SHOC2 and PP1c preferably bind M-Ras/MRAS, but they also bind K-Ras/KRAS, N-Ras/NRAS and H-Ras/HRAS. Post-translationally, palmitoylated by the ZDHHC9-GOLGA7 complex. Depalmitoylated by ABHD17A, ABHD17B and ABHD17C. A continuous cycle of de- and re-palmitoylation regulates rapid exchange between plasma membrane and Golgi. In terms of processing, acetylation at Lys-104 prevents interaction with guanine nucleotide exchange factors (GEFs). Fatty-acylated at Lys-169 and/or Lys-170. Post-translationally, ubiquitinated by the BCR(LZTR1) E3 ubiquitin ligase complex at Lys-170 in a non-degradative manner, leading to inhibit Ras signaling by decreasing Ras association with membranes. In terms of processing, phosphorylation at Ser-89 enhances NRAS association with its downstream effectors. (Microbial infection) Glucosylated at Thr-35 by P.sordellii toxin TcsL.

Its subcellular location is the cell membrane. It localises to the golgi apparatus membrane. The catalysed reaction is GTP + H2O = GDP + phosphate + H(+). Alternates between an inactive form bound to GDP and an active form bound to GTP. Activated by a guanine nucleotide-exchange factor (GEF) and inactivated by a GTPase-activating protein (GAP). Functionally, ras proteins bind GDP/GTP and possess intrinsic GTPase activity. In Homo sapiens (Human), this protein is GTPase NRas (NRAS).